Here is a 193-residue protein sequence, read N- to C-terminus: MVSLVKNQTVSLSKESSALSQLHFGLGWDPVKKKGLLGGLFGGNDSIDLDAGCVLMDSTGKTIDTIWFRKLESTCGAVVHSGDNLTGEGDGDDEVINVNLSRLPANVEYLAFTVNSFRGQSFNDVENAFCRVVDQTGKELARYKLTEQGSHTGIVISSLRRNNGNWDFTALGHACRGRTIDDMHSDIVSAVIR.

This sequence belongs to the CAPAB/TerDEXZ family.

Not known; seems to contribute to the tellurium resistance (Ter) mechanism. Also involved in phage inhibition (Phi) and colicin resistance (PacB). The protein is Tellurium resistance protein TerZ (terZ) of Serratia marcescens.